Here is a 192-residue protein sequence, read N- to C-terminus: GTP cyclohydrolase-2 (192 aa).

50-54 (RLHSE) contacts GTP. Cys55, Cys66, and Cys68 together coordinate Zn(2+). GTP-binding positions include 92–94 (EGR) and Thr114. Asp126 (proton acceptor) is an active-site residue. Arg128 acts as the Nucleophile in catalysis. Residues Thr149 and Lys154 each contribute to the GTP site.

This sequence belongs to the GTP cyclohydrolase II family. The cofactor is Zn(2+).

It carries out the reaction GTP + 4 H2O = 2,5-diamino-6-hydroxy-4-(5-phosphoribosylamino)-pyrimidine + formate + 2 phosphate + 3 H(+). It functions in the pathway cofactor biosynthesis; riboflavin biosynthesis; 5-amino-6-(D-ribitylamino)uracil from GTP: step 1/4. Its function is as follows. Catalyzes the conversion of GTP to 2,5-diamino-6-ribosylamino-4(3H)-pyrimidinone 5'-phosphate (DARP), formate and pyrophosphate. The polypeptide is GTP cyclohydrolase-2 (Helicobacter pylori (strain Shi470)).